Reading from the N-terminus, the 259-residue chain is Glucosamine-6-phosphate deaminase (259 aa).

The Proton acceptor; for enolization step role is filled by D66. D135 acts as the For ring-opening step in catalysis. The Proton acceptor; for ring-opening step role is filled by H137. E142 serves as the catalytic For ring-opening step.

It belongs to the glucosamine/galactosamine-6-phosphate isomerase family. NagB subfamily.

It carries out the reaction alpha-D-glucosamine 6-phosphate + H2O = beta-D-fructose 6-phosphate + NH4(+). It functions in the pathway amino-sugar metabolism; N-acetylneuraminate degradation; D-fructose 6-phosphate from N-acetylneuraminate: step 5/5. In terms of biological role, catalyzes the reversible isomerization-deamination of glucosamine 6-phosphate (GlcN6P) to form fructose 6-phosphate (Fru6P) and ammonium ion. This Rhodococcus jostii (strain RHA1) protein is Glucosamine-6-phosphate deaminase.